The following is a 203-amino-acid chain: UPF0637 protein MCCL_0722 (203 aa).

This sequence belongs to the UPF0637 family.

The polypeptide is UPF0637 protein MCCL_0722 (Macrococcus caseolyticus (strain JCSC5402) (Macrococcoides caseolyticum)).